A 223-amino-acid polypeptide reads, in one-letter code: UPF0758 protein Cvib_1178 (223 aa).

Positions 100–222 constitute an MPN domain; the sequence is KIQGARDVYE…WYSFRENNQL (123 aa). The Zn(2+) site is built by histidine 171, histidine 173, and aspartate 184. Residues 171–184 carry the JAMM motif motif; it reads HNHPSGDTEPSNAD.

This sequence belongs to the UPF0758 family.

In Chlorobium phaeovibrioides (strain DSM 265 / 1930) (Prosthecochloris vibrioformis (strain DSM 265)), this protein is UPF0758 protein Cvib_1178.